Reading from the N-terminus, the 379-residue chain is Cytochrome b (379 aa).

Transmembrane regions (helical) follow at residues 33–53 (FGSL…FLAM), 77–98 (WLIR…FIHV), 113–133 (WNIG…GYVL), and 178–198 (FFAF…VHLL). Residues H83 and H97 each coordinate heme b. Residues H182 and H196 each coordinate heme b. H201 provides a ligand contact to a ubiquinone. 4 consecutive transmembrane segments (helical) span residues 226 to 246 (TKDL…ALFF), 288 to 308 (LGGV…PLLN), 320 to 340 (VTQI…WIGG), and 347 to 367 (FTTI…ILIP).

This sequence belongs to the cytochrome b family. The cytochrome bc1 complex contains 11 subunits: 3 respiratory subunits (MT-CYB, CYC1 and UQCRFS1), 2 core proteins (UQCRC1 and UQCRC2) and 6 low-molecular weight proteins (UQCRH/QCR6, UQCRB/QCR7, UQCRQ/QCR8, UQCR10/QCR9, UQCR11/QCR10 and a cleavage product of UQCRFS1). This cytochrome bc1 complex then forms a dimer. Heme b serves as cofactor.

The protein localises to the mitochondrion inner membrane. In terms of biological role, component of the ubiquinol-cytochrome c reductase complex (complex III or cytochrome b-c1 complex) that is part of the mitochondrial respiratory chain. The b-c1 complex mediates electron transfer from ubiquinol to cytochrome c. Contributes to the generation of a proton gradient across the mitochondrial membrane that is then used for ATP synthesis. In Akodon reigi (Reig's grass mouse), this protein is Cytochrome b (MT-CYB).